The chain runs to 132 residues: CLAVATA3/ESR (CLE)-related protein TDIF (132 aa).

The N-terminal stretch at 1 to 26 is a signal peptide; that stretch reads MDIDLLWSFGGWFFILFPETINYCMA. The helical transmembrane segment at 42–62 threads the bilayer; the sequence is SCSSLFFVALLIITILITMLQ. A compositionally biased stretch (polar residues) spans 68–77; it reads EVTSLPTHQP. The disordered stretch occupies residues 68-132; that stretch reads EVTSLPTHQP…PSGPNPISNR (65 aa). Low complexity predominate over residues 87 to 96; it reads STSSTATTTT. The segment covering 101–111 has biased composition (basic residues); the sequence is KRTHHQSHPKP. 2 positions are modified to hydroxyproline: P123 and P126. A glycan (O-linked (Ara...) hydroxyproline) is linked at P126.

The protein belongs to the CLV3/ESR signal peptide family. Interacts specifically with the leucine-rich repeat receptor-like protein kinase TDR. In terms of processing, the TDIFp peptide contains two hydroxprolines, but hydroxylation had no direct effect on TDIFp activity. Post-translationally, the O-glycosylation (arabinosylation) of the hydroxyproline Pro-126 enhances binding affinity of the TDIFp peptide for its receptor.

Its subcellular location is the secreted. It localises to the extracellular space. It is found in the cell membrane. In terms of biological role, extracellular signal peptide that regulates cell fate. Represses tracheary element differentiation but promotes the formation of procambial cells adjacent to phloem cells in the veins. This chain is CLAVATA3/ESR (CLE)-related protein TDIF, found in Zinnia elegans (Garden zinnia).